A 330-amino-acid chain; its full sequence is Phenylalanine--tRNA ligase alpha subunit (330 aa).

Glu-254 is a binding site for Mg(2+).

The protein belongs to the class-II aminoacyl-tRNA synthetase family. Phe-tRNA synthetase alpha subunit type 1 subfamily. In terms of assembly, tetramer of two alpha and two beta subunits. Mg(2+) serves as cofactor.

The protein localises to the cytoplasm. It catalyses the reaction tRNA(Phe) + L-phenylalanine + ATP = L-phenylalanyl-tRNA(Phe) + AMP + diphosphate + H(+). This is Phenylalanine--tRNA ligase alpha subunit (pheS) from Neisseria meningitidis serogroup A / serotype 4A (strain DSM 15465 / Z2491).